The primary structure comprises 517 residues: Quinol oxidase subunit 1 (517 aa).

The next 12 helical transmembrane spans lie at 19-39 (VVWL…IAAM), 64-84 (IHGW…VIGF), 98-118 (QMAI…AGSP), 150-170 (MAYL…VTLI), 185-205 (IFAA…PALA), 226-246 (WAIL…FPLF), 271-291 (IYLL…TWPL), 303-323 (TLIL…TIFT), 333-353 (VGMG…QALV), 369-389 (VVGH…TTVF), 412-432 (IGMI…SVAG), and 460-480 (IGIP…LAYA). A Fe(II)-heme a-binding site is contributed by histidine 65. The Cu cation site is built by histidine 235, tyrosine 239, histidine 284, and histidine 285. Positions 235–239 (HPVVY) form a cross-link, 1'-histidyl-3'-tyrosine (His-Tyr). Residue histidine 372 coordinates heme a3. Histidine 374 serves as a coordination point for Fe(II)-heme a.

Belongs to the heme-copper respiratory oxidase family.

It localises to the cell membrane. It carries out the reaction 2 a quinol + O2 = 2 a quinone + 2 H2O. Catalyzes the reduction of oxygen to water. Functionally, subunits I, II and III form the functional core of the enzyme complex. Electrons originating in caldariella quinol are transferred to the binuclear center formed by heme A3 and Cu(B). In terms of biological role, subunit I binds heme a and the bimetallic center. The protein is Quinol oxidase subunit 1 (soxB) of Sulfolobus acidocaldarius (strain ATCC 33909 / DSM 639 / JCM 8929 / NBRC 15157 / NCIMB 11770).